Reading from the N-terminus, the 307-residue chain is Lactamase-like protein vrtG (307 aa).

Residues H97, H99, D101, and H102 each coordinate Zn(2+). D101 functions as the Proton donor/acceptor in the catalytic mechanism.

The protein belongs to the metallo-beta-lactamase superfamily. Zn(2+) is required as a cofactor.

It functions in the pathway secondary metabolite biosynthesis; terpenoid biosynthesis. Functionally, lactamase-like protein; part of the gene cluster that mediates the biosynthesis of viridicatumtoxin, a tetracycline-like fungal meroterpenoid with a unique, fused spirobicyclic ring system. The first step of the pathway is the production of the malonamoyl-CoA starter unit for the polyketide synthase vrtA. The aldolase vrtJ may be involved in the synthesis of the malonamate substrate for malonamoyl-CoA synthetase vrtB. The polyketide synthase vrtA then may utilize the malonamoyl-CoA starter unit, followed by sequential condensation of eight malonyl-CoA units to form the polyketide backbone. The cyclization of the last ring could be mediated by the lactamase-like protein vrtG. The proposed post-PKS tailoring steps are a hydroxylation at C5 catalyzed the cytochrome P450 monooxygenase vrtE, a hydroxylation at C12a catalyzed by VrtH and/or VrtI, and an O-methylation by the O-methyltransferase vrtF. VrtC is then proposed to catalyze the transfer of a geranyl group synthesized by vrtD to the aromatic C ring of the tetracyclic polyketide intermediate of viridicatumtoxin to yield previridicatumtoxin. Finally, the cytochrome P450 monooxygenase vrtK catalyzes the spirocyclization of the geranyl moiety of previridicatumtoxin to afford viridicatumtoxin. The chain is Lactamase-like protein vrtG from Penicillium aethiopicum.